A 483-amino-acid chain; its full sequence is Lipoamide acyltransferase component of branched-chain alpha-keto acid dehydrogenase complex, mitochondrial (483 aa).

The N-terminal 75 residues, 1-75 (MIARRIWRSH…AMATDSNSGL (75 aa)), are a transit peptide targeting the mitochondrion. A Lipoyl-binding domain is found at 76-150 (IDVPLAQTGE…KVGETLVRLA (75 aa)). Lys-116 carries the post-translational modification N6-lipoyllysine. A Peripheral subunit-binding (PSBD) domain is found at 183–220 (LSTPAVRNLAKDLGIDINVITGTGKDGRVLKEDVLRFS). Catalysis depends on residues His-453 and Asp-457.

The protein belongs to the 2-oxoacid dehydrogenase family. As to quaternary structure, forms a 24-polypeptide structural core with octahedral symmetry. Requires (R)-lipoate as cofactor. As to expression, expressed in the non-photosynthetic organs such as siliques, flowers and roots.

The protein localises to the mitochondrion matrix. The catalysed reaction is N(6)-[(R)-dihydrolipoyl]-L-lysyl-[protein] + 2-methylpropanoyl-CoA = N(6)-[(R)-S(8)-2-methylpropanoyldihydrolipoyl]-L-lysyl-[protein] + CoA. Its function is as follows. The branched-chain alpha-keto dehydrogenase complex catalyzes the overall conversion of alpha-keto acids to acyl-CoA and CO(2). It contains multiple copies of three enzymatic components: branched-chain alpha-keto acid decarboxylase (E1), lipoamide acyltransferase (E2) and lipoamide dehydrogenase (E3). Within this complex, the catalytic function of this enzyme is to accept, and to transfer to coenzyme A, acyl groups that are generated by the branched-chain alpha-keto acid decarboxylase component. Required during sugar starvation and acts under the control of a sugar-sensing mechanism involving Ser/Thr kinases and phosphatases. The sequence is that of Lipoamide acyltransferase component of branched-chain alpha-keto acid dehydrogenase complex, mitochondrial (BCE2) from Arabidopsis thaliana (Mouse-ear cress).